We begin with the raw amino-acid sequence, 185 residues long: Putative gustatory receptor clone PTE01 (185 aa).

A helical transmembrane segment spans residues 1–11 (MYLFLSNLSLA). The Extracellular portion of the chain corresponds to 12–42 (DISFTSTTLPKMIVDIQTNNRAISYSGCLTQ). A helical transmembrane segment spans residues 43-62 (MSFFMLFGCLDSLLLTAMAY). Over 63–84 (DRFVAICHPLHYQVIMNPRLCG) the chain is Cytoplasmic. The chain crosses the membrane as a helical span at residues 85–105 (LLVFLSILISLLVSQLHNSVV). At 106-138 (LQLTYFKSVDISHFFCDPSLLLNLACSDTFTNN) the chain is on the extracellular side. The helical transmembrane segment at 139-160 (IVMYFVGAISGFLPISGIFFSY) threads the bilayer. Topologically, residues 161-182 (YKIVSSILRMPSPGGKYKAFST) are cytoplasmic. The chain crosses the membrane as a helical span at residues 183–185 (CGS).

The protein belongs to the G-protein coupled receptor 1 family. Tongue specific.

It localises to the cell membrane. Functionally, possible taste receptor. This Rattus norvegicus (Rat) protein is Putative gustatory receptor clone PTE01.